We begin with the raw amino-acid sequence, 506 residues long: MHVAILLAIISLARAAPSTKGYTVATSLPGKSAFETRRLPDAPEILKNWAGRLDIPGTTIGNSLFFWLFSAEDKAYDDNLIIWLNGGPGCSSLVGAFLENGPLRFMGNSTMPERNPYSWAKLGHVLYIDQPVGTGFASEKVPVTSNKEVISNLYSWLMSFDAIFDHILRTKKVHIVGESYAGIYIPYIASEIVKRKSELPVNLVSIAIGDGTIGPNTGMSSLGMVGFLEEYASKLRIPRDIMNAISFGDHACGFDIIRQRAKVYPPRGPFHLPGRSGSANNTEISNMLQKGVADESLGSCNIHPDTPEKIRSSIVNSTCYGHCAVFETTADYMSSQQCFSIYNINYGCNFTNPTSTLEAYFSRSDVQIALNLMHPTDPLRPFQSCNPKILETLMAPANRPVPPSFEILPDLLTTHKLPVHIYQGRLDMLINHVGIEVTIQNMTWNGAQGFQDSLHFEFGRQKDKAVGLWNEERGLSYHLFFEGGHFLPADLPMEVLSYVKEVVLRQ.

The N-terminal stretch at 1–15 (MHVAILLAIISLARA) is a signal peptide. N-linked (GlcNAc...) asparagine glycosylation occurs at Asn108. Residue Ser179 is part of the active site. N-linked (GlcNAc...) asparagine glycosylation is found at Asn280, Asn316, and Asn349. The active site involves Asp427. The N-linked (GlcNAc...) asparagine glycan is linked to Asn441. His485 is an active-site residue.

Belongs to the peptidase S10 family.

The protein localises to the secreted. The catalysed reaction is Release of a C-terminal amino acid with broad specificity.. Functionally, involved in degradation of small peptides. The protein is Carboxypeptidase Y homolog ARB_06361 of Arthroderma benhamiae (strain ATCC MYA-4681 / CBS 112371) (Trichophyton mentagrophytes).